The sequence spans 143 residues: Large ribosomal subunit protein uL15 (143 aa).

The protein belongs to the universal ribosomal protein uL15 family. As to quaternary structure, part of the 50S ribosomal subunit.

Functionally, binds to the 23S rRNA. This is Large ribosomal subunit protein uL15 from Methanococcus aeolicus (strain ATCC BAA-1280 / DSM 17508 / OCM 812 / Nankai-3).